The primary structure comprises 75 residues: Penaeidin-3n (75 aa).

Positions 1–19 (MRLVVCLVFLASFALVCQG) are cleaved as a signal peptide. Gln20 is modified (pyrrolidone carboxylic acid). 2 disulfide bridges follow: Cys44–Cys59 and Cys48–Cys66. The residue at position 74 (Ser74) is a Serine amide.

The protein belongs to the penaeidin family.

It is found in the cytoplasmic granule. Its function is as follows. Antibacterial and antifungal activity. Presents chitin-binding activity. The protein is Penaeidin-3n of Penaeus setiferus (Atlantic white shrimp).